The chain runs to 1043 residues: Unconventional myosin-Ia (1043 aa).

One can recognise a Myosin motor domain in the interval Val-8–Arg-694. Gly-101 to Thr-108 is an ATP binding site. An actin-binding region spans residues Val-571–Glu-593. 3 IQ domains span residues Leu-697–Leu-719, Met-720–Lys-742, and Ile-743–Ala-772. A TH1 domain is found at Lys-858–Val-1042.

Belongs to the TRAFAC class myosin-kinesin ATPase superfamily. Myosin family. In terms of processing, phosphorylated by ALPK1.

Involved in directing the movement of organelles along actin filaments. This Homo sapiens (Human) protein is Unconventional myosin-Ia (MYO1A).